A 576-amino-acid polypeptide reads, in one-letter code: MESFDNIYLDLSKQPGKCKLAESGLGWKPSGEGETFTLDSSNVGAAQWSRAAKGFELKILSRSSGVIQLDGFDQEDFERLSKAFKIWYGINVESREHALRGWNWGKAEFTKAELSFNVQNRPAFEVPYSEISNTNLAGKNEVAVELALNTDGADANAQPAGSTKNRGRKAASGPDELVEMRFYIPGTVMKTEKGIKEENGKEENGEEEEEGEEQNAANLFYEMLMEKAEIGDVAGDTFATFLDVLHLTPRGRFDIDMYESSFRLRGKTYDYKIQYSSIKKFFLLPKNDDTHTLIVLGLDPPLRQGQTRYPFLVMQLKLDEEISLELNMTDELMETRYKDKLEPRYEEPIHQVVTKIFRGLSGKKVIMPSKDFVSHHGHSGVKCSIKANEGLLYFLDKSLIFVPKPATYIQVENIAIITMSRVGGAVSASRTFDITVSLKAGMGEHQFSNINREEQQPLEEFFKAKNIRFKNEMSDDAGALLAAALDNDVMGSSDDEGVRADRGSADEDEESIDEDFQAESESDVAEEYDSAHESSGSGSDAEMNDASDGGGDDDDDDEDVDMSEEERPKKKSKVGK.

Disordered regions lie at residues 153-172 (ADAN…KAAS), 193-213 (KGIK…EGEE), and 490-576 (MGSS…KVGK). Over residues 193 to 203 (KGIKEENGKEE) the composition is skewed to basic and acidic residues. Over residues 204–213 (NGEEEEEGEE) the composition is skewed to acidic residues. Basic and acidic residues predominate over residues 496 to 505 (EGVRADRGSA). 2 stretches are compositionally biased toward acidic residues: residues 506 to 528 (DEDE…AEEY) and 542 to 564 (EMND…DMSE).

It belongs to the SSRP1 family. As to quaternary structure, forms a stable heterodimer with spt16. The spt16-pob3 dimer weakly associates with multiple molecules of nhp6 to form the FACT complex.

Its subcellular location is the nucleus. It is found in the chromosome. Component of the FACT complex, a general chromatin factor that acts to reorganize nucleosomes. The FACT complex is involved in multiple processes that require DNA as a template such as mRNA elongation, DNA replication and DNA repair. During transcription elongation the FACT complex acts as a histone chaperone that both destabilizes and restores nucleosomal structure. It facilitates the passage of RNA polymerase II and transcription by promoting the dissociation of one histone H2A-H2B dimer from the nucleosome, then subsequently promotes the reestablishment of the nucleosome following the passage of RNA polymerase II. This chain is FACT complex subunit pob3 (pob3), found in Aspergillus oryzae (strain ATCC 42149 / RIB 40) (Yellow koji mold).